A 385-amino-acid polypeptide reads, in one-letter code: Outer membrane protein P2 (385 aa).

Residues 1 to 20 form the signal peptide; that stretch reads MKKTLAALIVGAFAASAANA.

The protein belongs to the Gram-negative porin family. In terms of assembly, homotrimer.

It localises to the cell outer membrane. Its function is as follows. Forms pores that allow passive diffusion of small molecules across the outer membrane. This Haemophilus influenzae protein is Outer membrane protein P2 (ompP2).